Consider the following 349-residue polypeptide: Protein AMBP (349 aa).

Residues 1-19 (MQGLGALFLLLTACLTLKA) form the signal peptide. Cys-52 and Lys-110 together coordinate 3-hydroxy-L-kynurenine. A disulfide bond links Cys-90 and Cys-187. The N-linked (GlcNAc...) asparagine glycan is linked to Asn-114. Positions 136 and 148 each coordinate 3-hydroxy-L-kynurenine. The O-linked (Xyl...) (chondroitin sulfate) serine glycan is linked to Ser-214. 6 disulfide bridges follow: Cys-230–Cys-280, Cys-239–Cys-263, Cys-255–Cys-276, Cys-286–Cys-336, Cys-295–Cys-319, and Cys-311–Cys-332. 2 BPTI/Kunitz inhibitor domains span residues 230-280 (CQLN…LQTC) and 286-336 (CNLP…KEYC). Asn-233 carries N-linked (GlcNAc...) asparagine glycosylation.

This sequence in the N-terminal section; belongs to the calycin superfamily. Lipocalin family. As to quaternary structure, monomer. Homodimer. In plasma, it occurs as a monomer or dimer and in covalently-linked complexes with immunoglobulin A (IgA), ALB/albumin and F2/prothrombin. Chromophore-bound alpha-1-microglobulin interacts with the constant region of immunoglobulin A. Chromophore-bound alpha-1-microglobulin interacts with ALB with molar ratio 2:1 and 1:1; this interaction does not prevent fatty acid binding to ALB. Interacts with F2/prothrombin (via N-terminus) with molar ratio 2:1 and 1:1; this interaction does not prevent the activation of prothrombin to thrombin. Interacts with NDUFAB1, a subunit of mitochondrial complex I. Interacts with FN1. I-alpha-I plasma protease inhibitors are assembled from one or two heavy chains (HC) and one light chain, bikunin. Inter-alpha-inhibitor (I-alpha-I) is composed of ITIH1/HC1, ITIH2/HC2 and bikunin, and pre-alpha-inhibitor (P-alpha-I) of ITIH3/HC3 and bikunin. Interacts with TNFAIP6 (via Link domain). In terms of assembly, monomer. Also occurs as a complex with tryptase in mast cells. Post-translationally, the precursor is proteolytically processed into separately functioning proteins. 3-hydroxykynurenine, an oxidized tryptophan metabolite that is common in biological fluids, reacts with Cys-53, Lys-111, Lys-137, and Lys-149 to form heterogeneous polycyclic chromophores including hydroxanthommatin. The reaction by alpha-1-microglobulin is autocatalytic; the human protein forms chromophore even when expressed in insect and bacterial cells. The chromophore can react with accessible cysteines forming non-reducible thioether cross-links with other molecules of alpha-1-microglobulin or with other proteins such as Ig alpha-1 chain C region 'Cys-352'. In terms of processing, heavy chains are interlinked with bikunin via a chondroitin 4-sulfate bridge to the C-terminal aspartate. Post-translationally, proteolytically cleaved by PRSS3 at Kunitz domain 2. In terms of tissue distribution, expressed by the liver and secreted in plasma.

It localises to the secreted. It is found in the endoplasmic reticulum. The protein localises to the cytoplasm. Its subcellular location is the cytosol. The protein resides in the cell membrane. It localises to the nucleus membrane. It is found in the mitochondrion inner membrane. The protein localises to the extracellular space. Its subcellular location is the extracellular matrix. Antioxidant and tissue repair protein with reductase, heme-binding and radical-scavenging activities. Removes and protects against harmful oxidants and repairs macromolecules in intravascular and extravascular spaces and in intracellular compartments. Intravascularly, plays a regulatory role in red cell homeostasis by preventing heme- and reactive oxygen species-induced cell damage. Binds and degrades free heme to protect fetal and adult red blood cells from hemolysis. Reduces extracellular methemoglobin, a Fe3+ (ferric) form of hemoglobin that cannot bind oxygen, back to the Fe2+ (ferrous) form deoxyhemoglobin, which has oxygen-carrying potential. Upon acute inflammation, inhibits oxidation of low-density lipoprotein particles by MPO and limits vascular damage. Extravascularly, protects from oxidation products formed on extracellular matrix structures and cell membranes. Catalyzes the reduction of carbonyl groups on oxidized collagen fibers and preserves cellular and extracellular matrix ultrastructures. Importantly, counteracts the oxidative damage at blood-placenta interface, preventing leakage of free fetal hemoglobin into the maternal circulation. Intracellularly, has a role in maintaining mitochondrial redox homeostasis. Bound to complex I of the respiratory chain of mitochondria, may scavenge free radicals and preserve mitochondrial ATP synthesis. Protects renal tubule epithelial cells from heme-induced oxidative damage to mitochondria. Reduces cytochrome c from Fe3+ (ferric) to the Fe2+ (ferrous) state through formation of superoxide anion radicals in the presence of ascorbate or NADH/NADPH electron donor cofactors, ascorbate being the preferred cofactor. Has a chaperone role in facilitating the correct folding of bikunin in the endoplasmic reticulum compartment. Its function is as follows. Kunitz-type serine protease inhibitor and structural component of extracellular matrix with a role in extracellular space remodeling and cell adhesion. Among others, has antiprotease activity toward kallikrein, a protease involved in airway inflammation; inhibits GZMK/granzyme, a granule-stored serine protease involved in NK and T cell cytotoxic responses; and inhibits PLG/plasmin, a protease required for activation of matrix metalloproteinases. As part of I-alpha-I complex, provides for the heavy chains to be transferred from I-alpha-I complex to hyaluronan in the presence of TNFAIP6, in a dynamic process that releases free bikunin and remodels extracellular matrix proteoglycan structures. Free bikunin, but not its heavy chain-bound form, acts as a potent protease inhibitor in airway secretions. Part of hyaluronan-rich extracellular matrix that surrounds oocyte during cumulus oophorus expansion, an indispensable process for proper ovulation. Also inhibits calcium oxalate crystallization. Functionally, kunitz-type serine protease inhibitor. Has high catalytic efficiency for F10/blood coagulation factor Xa and may act as an anticoagulant by inhibiting prothrombin activation. Inhibits trypsin and mast cell CMA1/chymase and tryptase proteases. The chain is Protein AMBP (Ambp) from Rattus norvegicus (Rat).